Consider the following 366-residue polypeptide: Cobalt-precorrin-5B C(1)-methyltransferase (366 aa).

Belongs to the CbiD family.

It catalyses the reaction Co-precorrin-5B + S-adenosyl-L-methionine = Co-precorrin-6A + S-adenosyl-L-homocysteine. The protein operates within cofactor biosynthesis; adenosylcobalamin biosynthesis; cob(II)yrinate a,c-diamide from sirohydrochlorin (anaerobic route): step 6/10. In terms of biological role, catalyzes the methylation of C-1 in cobalt-precorrin-5B to form cobalt-precorrin-6A. The chain is Cobalt-precorrin-5B C(1)-methyltransferase from Thermus thermophilus (strain ATCC BAA-163 / DSM 7039 / HB27).